Here is a 305-residue protein sequence, read N- to C-terminus: D-alanine--D-alanine ligase (305 aa).

The ATP-grasp domain occupies 107–299; that stretch reads KKMLCYHGIA…FDELVERILA (193 aa). 134–186 provides a ligand contact to ATP; the sequence is PDYPLVVKPAREGSTIGISIVHDEQELAAGLEEAFRHDDLVLVEQFIAGAEVT. Positions 254, 266, and 268 each coordinate Mg(2+).

The protein belongs to the D-alanine--D-alanine ligase family. It depends on Mg(2+) as a cofactor. Requires Mn(2+) as cofactor.

Its subcellular location is the cytoplasm. It catalyses the reaction 2 D-alanine + ATP = D-alanyl-D-alanine + ADP + phosphate + H(+). The protein operates within cell wall biogenesis; peptidoglycan biosynthesis. Functionally, cell wall formation. The sequence is that of D-alanine--D-alanine ligase from Syntrophotalea carbinolica (strain DSM 2380 / NBRC 103641 / GraBd1) (Pelobacter carbinolicus).